Here is a 91-residue protein sequence, read N- to C-terminus: MPRPTGKKFDKRRQQQNPLFKRKKFCRFTAAGVEQIDYKDIDTLKDFIGENGKITPARLTGTKAHYQRQLDTAIKRARFLALMPYTDQHKA.

It belongs to the bacterial ribosomal protein bS18 family. Part of the 30S ribosomal subunit. Forms a tight heterodimer with protein bS6.

In terms of biological role, binds as a heterodimer with protein bS6 to the central domain of the 16S rRNA, where it helps stabilize the platform of the 30S subunit. The chain is Small ribosomal subunit protein bS18 from Paraburkholderia phymatum (strain DSM 17167 / CIP 108236 / LMG 21445 / STM815) (Burkholderia phymatum).